The chain runs to 1782 residues: Atrochrysone carboxylic acid synthase (1782 aa).

An N-terminal acylcarrier protein transacylase domain (SAT) region spans residues 41–270 (HTYTKDRRYP…ALPVYGGLCH (230 aa)). The 435-residue stretch at 407–841 (QSKIAIVGMS…GGNSTLAIEE (435 aa)) folds into the Ketosynthase family 3 (KS3) domain. Catalysis depends on for beta-ketoacyl synthase activity residues cysteine 580, histidine 716, and histidine 759. Positions 946–1266 (FAFTGQGSSY…LGILHCAGVP (321 aa)) are malonyl-CoA:ACP transacylase (MAT) domain. The interval 1331 to 1648 (TSTVQQIIHE…RILLNRFFSA (318 aa)) is product template (PT) domain. Positions 1335 to 1468 (QQIIHEQYDG…ATVYYEEASD (134 aa)) are N-terminal hotdog fold. The PKS/mFAS DH domain occupies 1335-1643 (QQIIHEQYDG…FRRYPRILLN (309 aa)). The active-site Proton acceptor; for dehydratase activity is the histidine 1367. A C-terminal hotdog fold region spans residues 1495-1643 (VANRFTRRMA…FRRYPRILLN (149 aa)). The active-site Proton donor; for dehydratase activity is the aspartate 1554. The interval 1653–1703 (ARKSTPATSAPAPAPPAGSEALQPKAAPASTPAAPASADAPTTNGVKAAAE) is disordered. Residues 1678-1695 (AAPASTPAAPASADAPTT) are compositionally biased toward low complexity. The Carrier domain maps to 1704–1781 (PDANSTAAKA…DLKSWLLEYY (78 aa)). At serine 1741 the chain carries O-(pantetheine 4'-phosphoryl)serine.

In terms of tissue distribution, specifically expressed in conidia.

It catalyses the reaction holo-[ACP] + 8 malonyl-CoA + 8 H(+) = atrochrysone carboxyl-[ACP] + 8 CO2 + 8 CoA + 2 H2O. The protein operates within secondary metabolite biosynthesis. Non-reducing polyketide synthase; part of the gene cluster that mediates the biosynthesis of trypacidin, a mycotoxin with antiprotozoal activity and that plays a role in the infection process. The pathway begins with the synthesis of atrochrysone thioester by the polyketide synthase (PKS) tpcC. The atrochrysone carboxyl ACP thioesterase tpcB then breaks the thioester bond and releases the atrochrysone carboxylic acid from tpcC. The decarboxylase tpcK converts atrochrysone carboxylic acid to atrochrysone which is further reduced into emodin anthrone. The next step is performed by the emodin anthrone oxygenase tpcL that catalyzes the oxidation of emodin anthrone to emodin. Emodin O-methyltransferase encoded by tpcA catalyzes methylation of the 8-hydroxy group of emodin to form questin. Ring cleavage of questin by questin oxidase tpcI leads to desmethylsulochrin via several intermediates including questin epoxide. Another methylation step catalyzed by tpcM leads to the formation of sulochrin which is further converted to monomethylsulfochrin by tpcH. Finally, the tpcJ catalyzes the conversion of monomethylsulfochrin to trypacidin. Trypacidin is toxic for human pulmonary and bronchial epithelial cells by initiating the intracellular formation of nitric oxide (NO) and hydrogen peroxide (H(2)O(2)), thus triggering host necrotic cell death. The trypacidin pathway is also able to produce endocrocin via a distinct route from the endocrocin Enc pathway. The sequence is that of Atrochrysone carboxylic acid synthase from Aspergillus fumigatus (strain ATCC MYA-4609 / CBS 101355 / FGSC A1100 / Af293) (Neosartorya fumigata).